The following is a 525-amino-acid chain: Glutamate--cysteine ligase (525 aa).

This sequence belongs to the glutamate--cysteine ligase type 1 family. Type 1 subfamily.

It carries out the reaction L-cysteine + L-glutamate + ATP = gamma-L-glutamyl-L-cysteine + ADP + phosphate + H(+). The protein operates within sulfur metabolism; glutathione biosynthesis; glutathione from L-cysteine and L-glutamate: step 1/2. The sequence is that of Glutamate--cysteine ligase from Vibrio vulnificus (strain YJ016).